The sequence spans 793 residues: Protein translocase subunit SecA 2 (793 aa).

Residues Gln77, 95 to 99 (GEGKT), and Asp493 contribute to the ATP site.

It belongs to the SecA family. In terms of assembly, monomer and homodimer (Potential). Part of the accessory SecA2/SecY2 protein translocation apparatus required to export cell wall protein GspB.

Its subcellular location is the cell membrane. The protein localises to the cytoplasm. The catalysed reaction is ATP + H2O + cellular proteinSide 1 = ADP + phosphate + cellular proteinSide 2.. In terms of biological role, part of the accessory SecA2/SecY2 system specifically required to export GspB, a serine-rich repeat cell wall protein encoded upstream in the same operon. This Streptococcus gordonii protein is Protein translocase subunit SecA 2.